Here is a 671-residue protein sequence, read N- to C-terminus: UvrABC system protein C (671 aa).

Residues 16-95 form the GIY-YIG domain; the sequence is TTPGVYRFRD…IKEFKPRFNV (80 aa). Residues 207 to 242 enclose the UVR domain; that stretch reads KRFISRLEKDMAAAVAELDYERAAGLRDDIIALRKV.

The protein belongs to the UvrC family. In terms of assembly, interacts with UvrB in an incision complex.

Its subcellular location is the cytoplasm. Functionally, the UvrABC repair system catalyzes the recognition and processing of DNA lesions. UvrC both incises the 5' and 3' sides of the lesion. The N-terminal half is responsible for the 3' incision and the C-terminal half is responsible for the 5' incision. In Paenarthrobacter aurescens (strain TC1), this protein is UvrABC system protein C.